We begin with the raw amino-acid sequence, 382 residues long: Calcium/calmodulin-dependent protein kinase (382 aa).

Positions 23–278 (YKFGRTLGAG…SKEALGHIWL (256 aa)) constitute a Protein kinase domain. ATP contacts are provided by residues 29–37 (LGAGTYGVV) and lysine 50. Aspartate 142 functions as the Proton acceptor in the catalytic mechanism. The interval 291–301 (ELEAYRRRARL) is calmodulin-binding. Disordered stretches follow at residues 318 to 344 (KEHE…GDGS) and 359 to 382 (QKQE…FSNA).

It belongs to the protein kinase superfamily. CAMK Ser/Thr protein kinase family. CaMK subfamily.

The enzyme catalyses L-seryl-[protein] + ATP = O-phospho-L-seryl-[protein] + ADP + H(+). It catalyses the reaction L-threonyl-[protein] + ATP = O-phospho-L-threonyl-[protein] + ADP + H(+). In Metarhizium anisopliae (Entomophthora anisopliae), this protein is Calcium/calmodulin-dependent protein kinase.